We begin with the raw amino-acid sequence, 268 residues long: Protein atz-1 (268 aa).

Residues 171-243 (VDDANKLTEV…EEGEEDYEEE (73 aa)) adopt a coiled-coil conformation. The tract at residues 229-268 (DLMKEEEGEEDYEEEENYEVEEDFEDEEEYDEEGEEEDYE) is disordered. Over residues 231-268 (MKEEEGEEDYEEEENYEVEEDFEDEEEYDEEGEEEDYE) the composition is skewed to acidic residues.

The protein localises to the nucleus. In terms of biological role, plays a role in meiosis, germline development and oocyte morphogenesis. May play a role in DNA replication. In the germline, involved in the maintenance of transition zone nuclei and in chromosome structure and organization, but not required for mitotic proliferation. In Caenorhabditis elegans, this protein is Protein atz-1.